Here is a 252-residue protein sequence, read N- to C-terminus: Imidazole glycerol phosphate synthase subunit HisF (252 aa).

Residues Asp-11 and Asp-130 contribute to the active site.

The protein belongs to the HisA/HisF family. Heterodimer of HisH and HisF.

It localises to the cytoplasm. The enzyme catalyses 5-[(5-phospho-1-deoxy-D-ribulos-1-ylimino)methylamino]-1-(5-phospho-beta-D-ribosyl)imidazole-4-carboxamide + L-glutamine = D-erythro-1-(imidazol-4-yl)glycerol 3-phosphate + 5-amino-1-(5-phospho-beta-D-ribosyl)imidazole-4-carboxamide + L-glutamate + H(+). The protein operates within amino-acid biosynthesis; L-histidine biosynthesis; L-histidine from 5-phospho-alpha-D-ribose 1-diphosphate: step 5/9. Functionally, IGPS catalyzes the conversion of PRFAR and glutamine to IGP, AICAR and glutamate. The HisF subunit catalyzes the cyclization activity that produces IGP and AICAR from PRFAR using the ammonia provided by the HisH subunit. The chain is Imidazole glycerol phosphate synthase subunit HisF from Hydrogenobaculum sp. (strain Y04AAS1).